The primary structure comprises 209 residues: Ribosomal RNA large subunit methyltransferase E (209 aa).

Gly-63, Trp-65, Asp-83, Asp-99, and Asp-124 together coordinate S-adenosyl-L-methionine. Catalysis depends on Lys-164, which acts as the Proton acceptor.

It belongs to the class I-like SAM-binding methyltransferase superfamily. RNA methyltransferase RlmE family.

It localises to the cytoplasm. The enzyme catalyses uridine(2552) in 23S rRNA + S-adenosyl-L-methionine = 2'-O-methyluridine(2552) in 23S rRNA + S-adenosyl-L-homocysteine + H(+). In terms of biological role, specifically methylates the uridine in position 2552 of 23S rRNA at the 2'-O position of the ribose in the fully assembled 50S ribosomal subunit. The polypeptide is Ribosomal RNA large subunit methyltransferase E (Klebsiella pneumoniae (strain 342)).